The sequence spans 278 residues: Probable 3-hydroxybutyryl-CoA dehydrogenase (278 aa).

It belongs to the 3-hydroxyacyl-CoA dehydrogenase family.

It catalyses the reaction (3S)-3-hydroxybutanoyl-CoA + NADP(+) = acetoacetyl-CoA + NADPH + H(+). It functions in the pathway lipid metabolism; butanoate metabolism. The chain is Probable 3-hydroxybutyryl-CoA dehydrogenase (hbd) from Deinococcus radiodurans (strain ATCC 13939 / DSM 20539 / JCM 16871 / CCUG 27074 / LMG 4051 / NBRC 15346 / NCIMB 9279 / VKM B-1422 / R1).